We begin with the raw amino-acid sequence, 327 residues long: Urease accessory protein 4 (327 aa).

Residue asparagine 120 is glycosylated (N-linked (GlcNAc...) asparagine). A helical transmembrane segment spans residues 239–259; it reads VYATVLIIGPHLTTLFSYLAY.

It belongs to the UreD family. In terms of assembly, URE4, URE6 and URE7 may form a complex that acts as a GTP-hydrolysis-dependent molecular chaperone, activating the urease apoprotein URE1.

The protein resides in the membrane. Its function is as follows. Urease accessory protein required for the maturation and activation of urease via the functional incorporation of the urease nickel metallocenter. Plays a role in host brain invasion. The protein is Urease accessory protein 4 of Cryptococcus neoformans var. grubii serotype A (strain H99 / ATCC 208821 / CBS 10515 / FGSC 9487) (Filobasidiella neoformans var. grubii).